We begin with the raw amino-acid sequence, 256 residues long: Spore coat polysaccharide biosynthesis protein SpsA (256 aa).

A disulfide bridge links Cys-155 with Cys-243. The active site involves Asp-191.

It belongs to the glycosyltransferase 2 family. In terms of assembly, monomer in solution.

The protein operates within spore coat biogenesis; spore coat polysaccharide biosynthesis. In terms of biological role, glycosyltransferase implicated in the synthesis of the spore coat. This Bacillus subtilis (strain 168) protein is Spore coat polysaccharide biosynthesis protein SpsA (spsA).